A 418-amino-acid chain; its full sequence is Transmembrane protease serine 11D (418 aa).

Residues 1-20 (MYRPARVTSTSRFLNPYVVC) are Cytoplasmic-facing. The chain crosses the membrane as a helical; Signal-anchor for type II membrane protein span at residues 21–41 (FIVVAGVVILAVTIALLVYFL). Residues 42–418 (AFDQKSYFYR…LDWIRQQTGI (377 aa)) are Extracellular-facing. The region spanning 46-163 (KSYFYRSSFQ…STEITSLTDQ (118 aa)) is the SEA domain. N-linked (GlcNAc...) asparagine glycosylation is present at N144. Intrachain disulfides connect C173–C292, C212–C228, C337–C353, and C364–C393. Residues 187–417 (ILGGTEAEEG…YLDWIRQQTG (231 aa)) enclose the Peptidase S1 domain. Residues H227 and D272 each act as charge relay system in the active site. S368 serves as the catalytic Charge relay system.

It belongs to the peptidase S1 family. As to quaternary structure, monomer. As to expression, located in the cells of the submucosal serous glands of the bronchi and trachea.

The protein localises to the cell membrane. It is found in the secreted. Its activity is regulated as follows. Strongly inhibited by diisopropyl fluorophosphate, leupeptin, antipain, aprotinin, and soybean trypsin inhibitor, but hardly inhibited by secretory leukocyte protease inhibitor at 10 microM. Its function is as follows. May play some biological role in the host defense system on the mucous membrane independently of or in cooperation with other substances in airway mucous or bronchial secretions. Plays a role in the proteolytic processing of ACE2. Proteolytically cleaves and activates the human coronavirus 229E (HCoV-229E) spike glycoprotein which facilitate virus-cell membrane fusions; spike proteins are synthesized and maintained in precursor intermediate folding states and proteolysis permits the refolding and energy release required to create stable virus-cell linkages and membrane coalescence. Preferentially cleaves the C-terminal side of arginine residues at the P1 position of certain peptides, cleaving Boc-Phe-Ser-Arg-4-methylcoumaryl-7-amide most efficiently and having an optimum pH of 8.6 with this substrate. The sequence is that of Transmembrane protease serine 11D (TMPRSS11D) from Homo sapiens (Human).